The chain runs to 82 residues: ATP synthase subunit c (82 aa).

Transmembrane regions (helical) follow at residues 3–23 (PLIASASVLAAALAIGLASLG) and 57–77 (LAFMESLTIYGLVIALVLLFA).

As to quaternary structure, F-type ATPases have 2 components, F(1) - the catalytic core - and F(0) - the membrane proton channel. F(1) has five subunits: alpha(3), beta(3), gamma(1), delta(1), epsilon(1). F(0) has four main subunits: a(1), b(1), b'(1) and c(10-14). The alpha and beta chains form an alternating ring which encloses part of the gamma chain. F(1) is attached to F(0) by a central stalk formed by the gamma and epsilon chains, while a peripheral stalk is formed by the delta, b and b' chains.

It localises to the cellular thylakoid membrane. Its activity is regulated as follows. Inhibited by dicyclohexylcarbodiimide. Functionally, f(1)F(0) ATP synthase produces ATP from ADP in the presence of a proton or sodium gradient. F-type ATPases consist of two structural domains, F(1) containing the extramembraneous catalytic core and F(0) containing the membrane proton channel, linked together by a central stalk and a peripheral stalk. During catalysis, ATP synthesis in the catalytic domain of F(1) is coupled via a rotary mechanism of the central stalk subunits to proton translocation. Key component of the F(0) channel; it plays a direct role in translocation across the membrane. A homomeric c-ring of between 10-14 subunits forms the central stalk rotor element with the F(1) delta and epsilon subunits. In terms of biological role, the complex from the organism is particularly stable to disruption and remains functional after 6 hrs at 55 degrees Celsius. The chain is ATP synthase subunit c (atpE) from Thermosynechococcus vestitus (strain NIES-2133 / IAM M-273 / BP-1).